Here is a 35-residue protein sequence, read N- to C-terminus: Pheromone-binding protein 2 (35 aa).

This sequence belongs to the PBP/GOBP family. In terms of assembly, homodimer. In terms of tissue distribution, antenna.

Functionally, this major soluble protein in olfactory sensilla of male moths might serve to solubilize the extremely hydrophobic pheromone molecules and to transport pheromone through the aqueous lymph to receptors located on olfactory cilia. The sequence is that of Pheromone-binding protein 2 from Lymantria dispar (Gypsy moth).